The chain runs to 327 residues: PDZ and LIM domain protein 1 (327 aa).

Thr-2 is modified (N-acetylthreonine). Positions 3–85 constitute a PDZ domain; sequence TQQIVLQGPG…NMTLTVSRSE (83 aa). Residues Ser-90 and Ser-130 each carry the phosphoserine modification. Phosphotyrosine is present on Tyr-142. The tract at residues 161–184 is disordered; it reads VESKTSASGEEANSRPVVQPHPSG. The 60-residue stretch at 256 to 315 folds into the LIM zinc-binding domain; sequence PICDKCGTGIVGVFVKLRDHHRHPECYVCTDCGINLKQKGHFFVEDQIYCEKHARERVTP. Zn(2+) is bound by residues Cys-258, Cys-261, His-278, Cys-281, Cys-284, Cys-287, Cys-305, and His-308. The residue at position 314 (Thr-314) is a Phosphothreonine. Tyr-319 carries the phosphotyrosine modification.

Interacts with ACTN1, ACTN2 and ACTN4. Interacts with PDLIM4. As to expression, expressed in heart, lung, spleen, testis and skeletal muscle.

The protein resides in the cytoplasm. Its subcellular location is the cytoskeleton. The protein localises to the myofibril. It is found in the sarcomere. It localises to the z line. Its function is as follows. Cytoskeletal protein that may act as an adapter that brings other proteins (like kinases) to the cytoskeleton. Involved in assembly, disassembly and directioning of stress fibers in fibroblasts. Required for the localization of ACTN1 and PALLD to stress fibers. Required for cell migration and in maintaining cell polarity of fibroblasts. The polypeptide is PDZ and LIM domain protein 1 (Pdlim1) (Mus musculus (Mouse)).